The chain runs to 54 residues: uncharacterized protein (54 aa).

A compositionally biased stretch (basic and acidic residues) spans 23–35; it reads DVMQEGETAKELN. The tract at residues 23–54 is disordered; that stretch reads DVMQEGETAKELNYEGEDMQATSSAQNRQTSV. Residues 42 to 54 are compositionally biased toward polar residues; sequence QATSSAQNRQTSV.

This is an uncharacterized protein from Bacillus subtilis (strain 168).